Here is a 117-residue protein sequence, read N- to C-terminus: Hydrogenase maturation factor HypA (117 aa).

H2 is a binding site for Ni(2+). Zn(2+)-binding residues include C73, C76, C89, and C92.

This sequence belongs to the HypA/HybF family.

In terms of biological role, involved in the maturation of [NiFe] hydrogenases. Required for nickel insertion into the metal center of the hydrogenase. The chain is Hydrogenase maturation factor HypA from Pelodictyon phaeoclathratiforme (strain DSM 5477 / BU-1).